We begin with the raw amino-acid sequence, 506 residues long: uncharacterized protein (506 aa).

Belongs to the Mg-chelatase subunits D/I family. ComM subfamily.

This is an uncharacterized protein from Salmonella typhimurium (strain LT2 / SGSC1412 / ATCC 700720).